A 155-amino-acid polypeptide reads, in one-letter code: SsrA-binding protein (155 aa).

The protein belongs to the SmpB family.

It is found in the cytoplasm. Its function is as follows. Required for rescue of stalled ribosomes mediated by trans-translation. Binds to transfer-messenger RNA (tmRNA), required for stable association of tmRNA with ribosomes. tmRNA and SmpB together mimic tRNA shape, replacing the anticodon stem-loop with SmpB. tmRNA is encoded by the ssrA gene; the 2 termini fold to resemble tRNA(Ala) and it encodes a 'tag peptide', a short internal open reading frame. During trans-translation Ala-aminoacylated tmRNA acts like a tRNA, entering the A-site of stalled ribosomes, displacing the stalled mRNA. The ribosome then switches to translate the ORF on the tmRNA; the nascent peptide is terminated with the 'tag peptide' encoded by the tmRNA and targeted for degradation. The ribosome is freed to recommence translation, which seems to be the essential function of trans-translation. The polypeptide is SsrA-binding protein (Bacillus mycoides (strain KBAB4) (Bacillus weihenstephanensis)).